We begin with the raw amino-acid sequence, 400 residues long: MTQFASPVLHSLLDTDAYKLHMQQAVFHHYYDVQVAAEFRCRGDDLLGIYADAIREQVDAMQHLRLQEDEFQWLSGLPFFKPDYLNWLREFRYNPAQVCVTNDNGKLNIRLTGPWREVIMWEVPLLAVISELVHHYRSPNAGVDQALDALESKLVDFTALTANLDMSRFHLMDFGTRRRFSREVQQAIVKRLQQESWFVGTSNYDLARRLALTPMGTQAHEWFQAHQQISPDLATSQRAALAAWLNEYPDQLGIALTDCITMDAFLRDFGIEFASRYQGLRHDSGDPVAWGEKAIAHYEKLGIDPLTKTLVFSDNLDLQKAVELYRHFASRVQLSFGIGTRLTCDIPQVKPLNIVIKLVECNGKPVAKLSDSPGKTICHDKAFVRALRKAFDLPQIRKAS.

His-220 carries the phosphohistidine; by autocatalysis modification.

The protein belongs to the NAPRTase family. Transiently phosphorylated on a His residue during the reaction cycle. Phosphorylation strongly increases the affinity for substrates and increases the rate of nicotinate D-ribonucleotide production. Dephosphorylation regenerates the low-affinity form of the enzyme, leading to product release.

It catalyses the reaction nicotinate + 5-phospho-alpha-D-ribose 1-diphosphate + ATP + H2O = nicotinate beta-D-ribonucleotide + ADP + phosphate + diphosphate. It participates in cofactor biosynthesis; NAD(+) biosynthesis; nicotinate D-ribonucleotide from nicotinate: step 1/1. Its function is as follows. Catalyzes the synthesis of beta-nicotinate D-ribonucleotide from nicotinate and 5-phospho-D-ribose 1-phosphate at the expense of ATP. The chain is Nicotinate phosphoribosyltransferase from Salmonella schwarzengrund (strain CVM19633).